We begin with the raw amino-acid sequence, 747 residues long: Fibroblast growth factor receptor (747 aa).

Positions 1–24 are cleaved as a signal peptide; it reads MIQLQNTFIFIALTIFTSASTTSL. The Extracellular portion of the chain corresponds to 25–288; that stretch reads KNETKPLNTI…TEEIPQDTHY (264 aa). Asn-26, Asn-42, and Asn-63 each carry an N-linked (GlcNAc...) asparagine glycan. Positions 47–68 are disordered; the sequence is EEDLFDTNGAPKSDTVNASTTT. 2 consecutive Ig-like C2-type domains span residues 74–167 and 175–267; these read PRWV…YELD and PPVL…AWLT. The cysteines at positions 99 and 151 are disulfide-linked. 5 N-linked (GlcNAc...) asparagine glycosylation sites follow: Asn-161, Asn-185, Asn-217, Asn-227, and Asn-240. The cysteines at positions 198 and 251 are disulfide-linked. The helical transmembrane segment at 289–309 threads the bilayer; the sequence is LIYIFGVVCFIILLAFIVYMC. The Cytoplasmic segment spans residues 310–747; sequence NSRYQNKDPP…NGHARMQSDV (438 aa). Positions 377–660 constitute a Protein kinase domain; sequence ILLHERIDEG…QLVEDLDRML (284 aa). ATP is bound by residues 383-391 and Lys-412; that span reads IDEGFFGQV. Asp-525 (proton acceptor) is an active-site residue. Tyr-556 carries the phosphotyrosine; by autocatalysis modification. Residues 679–731 are disordered; it reads YLPSDVDSNEDTESRDSANATGEDSDSVFEPIDGHGAHAYEVDEAGPLLNPQP. Basic and acidic residues predominate over residues 710-719; sequence IDGHGAHAYE.

The protein belongs to the protein kinase superfamily. Tyr protein kinase family. Fibroblast growth factor receptor subfamily.

It is found in the membrane. The enzyme catalyses L-tyrosyl-[protein] + ATP = O-phospho-L-tyrosyl-[protein] + ADP + H(+). In terms of biological role, receptor for basic fibroblast growth factor. This chain is Fibroblast growth factor receptor (FGFR), found in Ciona intestinalis (Transparent sea squirt).